The chain runs to 256 residues: Hydroxyacylglutathione hydrolase (256 aa).

7 residues coordinate Zn(2+): H56, H58, D60, H61, H114, D133, and H171.

The protein belongs to the metallo-beta-lactamase superfamily. Glyoxalase II family. In terms of assembly, monomer. It depends on Zn(2+) as a cofactor.

The catalysed reaction is an S-(2-hydroxyacyl)glutathione + H2O = a 2-hydroxy carboxylate + glutathione + H(+). Its pathway is secondary metabolite metabolism; methylglyoxal degradation; (R)-lactate from methylglyoxal: step 2/2. Thiolesterase that catalyzes the hydrolysis of S-D-lactoyl-glutathione to form glutathione and D-lactic acid. The chain is Hydroxyacylglutathione hydrolase from Rhodobacter capsulatus (Rhodopseudomonas capsulata).